The chain runs to 486 residues: Galactose-3-O-sulfotransferase 4 (486 aa).

Topologically, residues methionine 1–leucine 18 are cytoplasmic. The helical; Signal-anchor for type II membrane protein transmembrane segment at glycine 19–phenylalanine 39 threads the bilayer. Residues glutamine 40–proline 486 lie on the Lumenal side of the membrane. N-linked (GlcNAc...) asparagine glycosylation occurs at asparagine 374.

It belongs to the galactose-3-O-sulfotransferase family. The cofactor is Mn(2+). As to expression, expressed mainly in placenta, thymus, testis, ovary, spinal cord, trachea and adrenal gland and at low levels in brain, lung, spleen, prostate, small intestine, colon, stomach thyroid and lymph node.

Its subcellular location is the golgi apparatus. It localises to the golgi stack membrane. The protein operates within protein modification; carbohydrate sulfation. Its function is as follows. Catalyzes the transfer of sulfate to beta-1,3-linked galactose residues in O-linked glycoproteins. Good substrates include asialofetuin, Gal-beta-1,3-GalNAc and Gal-beta-1,3 (GlcNAc-beta-1,6)GalNAc. The polypeptide is Galactose-3-O-sulfotransferase 4 (GAL3ST4) (Homo sapiens (Human)).